The chain runs to 81 residues: Large ribosomal subunit protein bL31B (81 aa).

This sequence belongs to the bacterial ribosomal protein bL31 family. Type B subfamily. In terms of assembly, part of the 50S ribosomal subunit.

The sequence is that of Large ribosomal subunit protein bL31B from Lactococcus lactis subsp. cremoris (strain MG1363).